The sequence spans 476 residues: Aspartyl/glutamyl-tRNA(Asn/Gln) amidotransferase subunit B (476 aa).

This sequence belongs to the GatB/GatE family. GatB subfamily. As to quaternary structure, heterotrimer of A, B and C subunits.

It catalyses the reaction L-glutamyl-tRNA(Gln) + L-glutamine + ATP + H2O = L-glutaminyl-tRNA(Gln) + L-glutamate + ADP + phosphate + H(+). The catalysed reaction is L-aspartyl-tRNA(Asn) + L-glutamine + ATP + H2O = L-asparaginyl-tRNA(Asn) + L-glutamate + ADP + phosphate + 2 H(+). Functionally, allows the formation of correctly charged Asn-tRNA(Asn) or Gln-tRNA(Gln) through the transamidation of misacylated Asp-tRNA(Asn) or Glu-tRNA(Gln) in organisms which lack either or both of asparaginyl-tRNA or glutaminyl-tRNA synthetases. The reaction takes place in the presence of glutamine and ATP through an activated phospho-Asp-tRNA(Asn) or phospho-Glu-tRNA(Gln). This chain is Aspartyl/glutamyl-tRNA(Asn/Gln) amidotransferase subunit B, found in Clostridium botulinum (strain Eklund 17B / Type B).